The sequence spans 60 residues: Large ribosomal subunit protein uL30 (60 aa).

The protein belongs to the universal ribosomal protein uL30 family. As to quaternary structure, part of the 50S ribosomal subunit.

The sequence is that of Large ribosomal subunit protein uL30 from Oceanobacillus iheyensis (strain DSM 14371 / CIP 107618 / JCM 11309 / KCTC 3954 / HTE831).